A 376-amino-acid polypeptide reads, in one-letter code: 23S rRNA (uracil(747)-C(5))-methyltransferase RlmC (376 aa).

[4Fe-4S] cluster-binding residues include C3, C11, C14, and C87. Q212, F241, E262, and N307 together coordinate S-adenosyl-L-methionine. The active-site Nucleophile is the C334.

The protein belongs to the class I-like SAM-binding methyltransferase superfamily. RNA M5U methyltransferase family. RlmC subfamily.

The catalysed reaction is uridine(747) in 23S rRNA + S-adenosyl-L-methionine = 5-methyluridine(747) in 23S rRNA + S-adenosyl-L-homocysteine + H(+). Its function is as follows. Catalyzes the formation of 5-methyl-uridine at position 747 (m5U747) in 23S rRNA. This is 23S rRNA (uracil(747)-C(5))-methyltransferase RlmC from Citrobacter koseri (strain ATCC BAA-895 / CDC 4225-83 / SGSC4696).